The primary structure comprises 371 residues: MSNQHTLLISNLLPVGSNISTWWNFGSMLLSCLFLQTTTGFFLAIHYTANINLAFSSVIHITRDVPYGWIMQNTHAISASAFFICIYIHIARGLYYGSYLNKGVWLTGVALLTTLMATAFFGYVLPWGQMSFWAATVITNLLTAIPYLGTSLTTWLWGGFSINDPTLTRFFALHFILPFLIISLSSIHIIMLHNEGSSNPLGTNSDIDKIPFHPYHSYKDLLMFITLMTMLLLTLSFMPNLFNDPENFSKANPLITPQHIKPEWYFLFAYGILRSIPNKLGGALALTMSIIILTTAPFTHTSYTRSMTFRPLAQTLFWTLIATFITITWAATKPIEPPFLLISQTTAILYFSFFIMNPVLGLVENMMMKYN.

4 helical membrane-spanning segments follow: residues 25–45 (FGSM…FLAI), 69–90 (WIMQ…YIHI), 105–125 (WLTG…GYVL), and 170–190 (FFAL…IHII). Residues His-75 and His-89 each coordinate heme b. Heme b-binding residues include His-174 and His-188. An a ubiquinone-binding site is contributed by His-193. 4 helical membrane passes run 218-238 (YKDL…LSFM), 280-300 (LGGA…PFTH), 312-332 (LAQT…WAAT), and 339-358 (FLLI…IMNP).

This sequence belongs to the cytochrome b family. As to quaternary structure, the cytochrome bc1 complex contains 3 respiratory subunits (MT-CYB, CYC1 and UQCRFS1), 2 core proteins (UQCRC1 and UQCRC2) and probably 6 low-molecular weight proteins. Requires heme b as cofactor.

Its subcellular location is the mitochondrion inner membrane. Its function is as follows. Component of the ubiquinol-cytochrome c reductase complex (complex III or cytochrome b-c1 complex) that is part of the mitochondrial respiratory chain. The b-c1 complex mediates electron transfer from ubiquinol to cytochrome c. Contributes to the generation of a proton gradient across the mitochondrial membrane that is then used for ATP synthesis. In Laticauda colubrina (Yellow-lipped sea krait), this protein is Cytochrome b (MT-CYB).